The following is a 957-amino-acid chain: Plasma membrane ATPase 1 (957 aa).

Topologically, residues 1 to 66 are cytoplasmic; the sequence is MGEEKPEVLD…EKKDSKLLKF (66 aa). Residues 67-86 form a helical membrane-spanning segment; that stretch reads LGFMWNPLSWVMEAAAIMAI. Residues 87-98 lie on the Extracellular side of the membrane; the sequence is ALANGGGKPPDW. The chain crosses the membrane as a helical span at residues 99–119; the sequence is QDFVGIITLLIINSTISFIEE. Over 120–248 the chain is Cytoplasmic; it reads NNAGNAAAAL…GHFQKVLTAI (129 aa). Residues 249 to 269 form a helical membrane-spanning segment; the sequence is GNFCICSIAVGMIIEIIVMYP. Residues 270-279 are Extracellular-facing; sequence IQHRAYRPGI. Residues 280–301 traverse the membrane as a helical segment; the sequence is DNLLVLLIGGIPIAMPTVLSVT. Over 302–648 the chain is Cytoplasmic; it reads MAIGSHRLAQ…TSRAIFQRMK (347 aa). Catalysis depends on Asp-334, which acts as the 4-aspartylphosphate intermediate. Mg(2+) contacts are provided by Asp-593 and Asp-597. The chain crosses the membrane as a helical span at residues 649 to 670; the sequence is NYTIYAVSITIRIVLGFMLLAL. At 671–675 the chain is on the extracellular side; that stretch reads IWKFD. Residues 676 to 698 form a helical membrane-spanning segment; it reads FPPFMVLIIAILNDGTIMTISKD. The Cytoplasmic portion of the chain corresponds to 699–714; the sequence is RVKPSPLPDSWKLAEI. The helical transmembrane segment at 715 to 735 threads the bilayer; sequence FTTGIVLGGYLAMMTVIFFWA. At 736–760 the chain is on the extracellular side; that stretch reads AYKTNFFPHVFGVSTLEKTATDDFR. Residues 761 to 781 form a helical membrane-spanning segment; the sequence is KLASAIYLQVSIISQALIFVT. Topologically, residues 782–793 are cytoplasmic; it reads RSRSWSFVERPG. A helical membrane pass occupies residues 794-814; that stretch reads FLLVIAFVIAQLVATLIAVYA. Residues 815 to 823 are Extracellular-facing; that stretch reads NWSFAAIEG. A helical membrane pass occupies residues 824–844; it reads IGWGWAGVIWIYNLVFYIPLD. Residues 845–957 are Cytoplasmic-facing; the sequence is IIKFFIRYAL…IETIQQAYTV (113 aa).

It belongs to the cation transport ATPase (P-type) (TC 3.A.3) family. Type IIIA subfamily. As to expression, expressed in roots, stems, leaves from both vegetative and flowering plants, and flowers at early and late stages of development with highest expression levels found in flowers and stem.

The protein localises to the cell membrane. It carries out the reaction ATP + H2O + H(+)(in) = ADP + phosphate + 2 H(+)(out). The plasma membrane ATPase of plants and fungi is a hydrogen ion pump. The proton gradient it generates drives the active transport of nutrients by H(+)-symport. The resulting external acidification and/or internal alkinization may mediate growth responses. This chain is Plasma membrane ATPase 1 (PMA1), found in Nicotiana plumbaginifolia (Leadwort-leaved tobacco).